The following is a 450-amino-acid chain: Glucose-6-phosphate isomerase (450 aa).

Thr38 carries the post-translational modification Phosphothreonine. Glu290 functions as the Proton donor in the catalytic mechanism. Residues His311 and Lys425 contribute to the active site.

This sequence belongs to the GPI family.

The protein resides in the cytoplasm. The catalysed reaction is alpha-D-glucose 6-phosphate = beta-D-fructose 6-phosphate. It functions in the pathway carbohydrate biosynthesis; gluconeogenesis. Its pathway is carbohydrate degradation; glycolysis; D-glyceraldehyde 3-phosphate and glycerone phosphate from D-glucose: step 2/4. Catalyzes the reversible isomerization of glucose-6-phosphate to fructose-6-phosphate. In Bacillus licheniformis (strain ATCC 14580 / DSM 13 / JCM 2505 / CCUG 7422 / NBRC 12200 / NCIMB 9375 / NCTC 10341 / NRRL NRS-1264 / Gibson 46), this protein is Glucose-6-phosphate isomerase.